A 290-amino-acid chain; its full sequence is Probable endonuclease 4 (290 aa).

Zn(2+) contacts are provided by His69, His109, Glu145, Asp179, His182, His216, Asp229, His231, and Glu261.

The protein belongs to the AP endonuclease 2 family. It depends on Zn(2+) as a cofactor.

It carries out the reaction Endonucleolytic cleavage to 5'-phosphooligonucleotide end-products.. Endonuclease IV plays a role in DNA repair. It cleaves phosphodiester bonds at apurinic or apyrimidinic (AP) sites, generating a 3'-hydroxyl group and a 5'-terminal sugar phosphate. In Chlorobium limicola (strain DSM 245 / NBRC 103803 / 6330), this protein is Probable endonuclease 4.